The chain runs to 315 residues: Methionyl-tRNA formyltransferase (315 aa).

Residue 113–116 coordinates (6S)-5,6,7,8-tetrahydrofolate; the sequence is SLLP.

This sequence belongs to the Fmt family.

The catalysed reaction is L-methionyl-tRNA(fMet) + (6R)-10-formyltetrahydrofolate = N-formyl-L-methionyl-tRNA(fMet) + (6S)-5,6,7,8-tetrahydrofolate + H(+). Functionally, attaches a formyl group to the free amino group of methionyl-tRNA(fMet). The formyl group appears to play a dual role in the initiator identity of N-formylmethionyl-tRNA by promoting its recognition by IF2 and preventing the misappropriation of this tRNA by the elongation apparatus. This Escherichia coli O127:H6 (strain E2348/69 / EPEC) protein is Methionyl-tRNA formyltransferase.